Consider the following 590-residue polypeptide: Aspartate--tRNA(Asp/Asn) ligase (590 aa).

Glu-176 provides a ligand contact to L-aspartate. Residues 200 to 203 (QLFK) are aspartate. Residues Arg-222 and His-451 each contribute to the L-aspartate site. Residue 222 to 224 (RDE) participates in ATP binding. ATP is bound at residue Glu-485. Residue Arg-492 coordinates L-aspartate. 537-540 (GIDR) is an ATP binding site.

It belongs to the class-II aminoacyl-tRNA synthetase family. Type 1 subfamily. Homodimer.

It localises to the cytoplasm. It catalyses the reaction tRNA(Asx) + L-aspartate + ATP = L-aspartyl-tRNA(Asx) + AMP + diphosphate. Its function is as follows. Aspartyl-tRNA synthetase with relaxed tRNA specificity since it is able to aspartylate not only its cognate tRNA(Asp) but also tRNA(Asn). Reaction proceeds in two steps: L-aspartate is first activated by ATP to form Asp-AMP and then transferred to the acceptor end of tRNA(Asp/Asn). In Ehrlichia canis (strain Jake), this protein is Aspartate--tRNA(Asp/Asn) ligase.